The following is a 672-amino-acid chain: SHC SH2 domain-binding protein 1 (672 aa).

Ala-2 carries the N-acetylalanine modification. Ser-5 is subject to Phosphoserine. Thr-7 is modified (phosphothreonine). 5 positions are modified to phosphoserine: Ser-31, Ser-42, Ser-44, Ser-47, and Ser-273. PbH1 repeat units follow at residues 428-451 (GADIKISGIKFVQHDAVEGILIVH), 452-473 (RGKTTLENCVLQCETTGVTVRT), 474-496 (SAEFLMKNSDLYGAKGAGIEIYP), 497-518 (GSQCTLSDNGIHHCKEGILIKD), and 526-548 (IPKISMVNNIIHNNEGYGVVLVK). Ser-634 carries the post-translational modification Phosphoserine.

As to quaternary structure, interacts directly with isoform p52shc of SHC1 via its SH2 domain. Interacts with TRIM71; leading to enhanced SHCBP1 protein stability. Interacts with both members of the centralspindlin complex, KIF23 and RACGAP1.

The protein resides in the midbody. Its subcellular location is the cytoplasm. It is found in the cytoskeleton. The protein localises to the spindle. May play a role in signaling pathways governing cellular proliferation, cell growth and differentiation. May be a component of a novel signaling pathway downstream of Shc. Acts as a positive regulator of FGF signaling in neural progenitor cells. The sequence is that of SHC SH2 domain-binding protein 1 (SHCBP1) from Homo sapiens (Human).